The chain runs to 252 residues: UPF0714 protein YndL (252 aa).

Residues 33 to 51 (IVKLLMIFMVFTPISSIYA) form a helical membrane-spanning segment.

This sequence belongs to the UPF0714 family.

It localises to the cell membrane. The chain is UPF0714 protein YndL (yndL) from Bacillus subtilis (strain 168).